The following is a 94-amino-acid chain: MPKLAVVLLVLLILPLSYFDAAGGQVVQGDRRGNGLARYLQRGDRDVRECQVNTPGSSWGKCCMTRMCGTMCCARSGCTCVYHWRRGHGCSCPG.

The signal sequence occupies residues 1–24; that stretch reads MPKLAVVLLVLLILPLSYFDAAGG. The propeptide occupies 25-45; that stretch reads QVVQGDRRGNGLARYLQRGDR. E49 carries the post-translational modification 4-carboxyglutamate. P55 is modified (4-hydroxyproline). 4 disulfides stabilise this stretch: C63/C72, C68/C80, C73/C90, and C78/C92.

Belongs to the conotoxin D superfamily. Hetero-, homo- or pseudo-homodimer (identical sequence, different post-translational modifications). Homodimer of [carboxyGlu-49, hydroxyPro-55]Ms20.3, and heterodimer of [carboxyGlu-49, hydroxyPro-55]Ms20.3 and [carboxy'Glu-50', hydroxy'Pro-56']Ms20.5 may exist. As to expression, expressed by the venom duct.

It is found in the secreted. Functionally, alpha-D-conopeptides act on postsynaptic membranes, they bind to the nicotinic acetylcholine receptors (nAChR) and thus inhibit them. Through its two C-terminal domains, this homodimeric protein would bind to two nAChR allosteric sites, located outside the nAChR C-loop of the principal binding face and at the adjacent binding interface in a clockwise direction. This toxin specifically blocks mammalian neuronal nAChR of the alpha-7/CHRNA7 (IC(50)=0.12 nM), alpha-3-beta-2/CHRNA3-CHRNB2 (IC(50)=1.08 nM), and alpha-4-beta-2/CHRNA4-CHRNB2 (IC(50)=4.5 nM) subtypes. Has no effect on alpha-3-beta-4/CHRNA3-CHRNB4, alpha-4-beta-4/CHRNA4-CHRNB4 and alpha-1-beta-1-epsilon-delta/CHRNA1-CHRNB1-CHRNE-CHRND subtypes of nAChRs. This is Alpha-conotoxin Ms20.3 from Conus mustelinus (Weasel cone).